Here is a 139-residue protein sequence, read N- to C-terminus: Transcription antitermination protein NusB (139 aa).

The protein belongs to the NusB family.

Involved in transcription antitermination. Required for transcription of ribosomal RNA (rRNA) genes. Binds specifically to the boxA antiterminator sequence of the ribosomal RNA (rrn) operons. The chain is Transcription antitermination protein NusB from Erwinia tasmaniensis (strain DSM 17950 / CFBP 7177 / CIP 109463 / NCPPB 4357 / Et1/99).